The sequence spans 459 residues: MVNIYNTLTRQKEQFKPMVEGKIDMYVCGITIYDYCHIGHARTFVGFDVIVRYLRHIGYDLKYVRNITDVDDKIIKRANENGESINDLTVRMTKAMHEDFDSLNMLRPDVEPTVTAHMDEIIEMVERLITKGHAYVAADGDVLFDVSTFEQYGALSQQDLTMLQSGSRVEVAQDKDDPLDFVLWKKAKAGEPSWSSPWGEGRPGWHIECSAMSSKHLGEHFDIHGGGSDLQFPHHENEIAQSCCANNGKYVNTWIHTGMVQVNKEKMSKSLDNFFTVREVLKQYDAESVRYFLISGHYRSQLNYSQENLDQARSSLERIYTALRGVEPVACELDDNEYVIKFRKAMDDDFNTPEALPVLFELAKELNLVKDIDSQQAGQLAFILGSISEVLGVAQQDPEAFLQGGQDDDEVAQIEALIVKRNDARASKNWAAADEARDALSALGVILEDSAGKTTWRKA.

C28 contacts Zn(2+). Residues I30 to H40 carry the 'HIGH' region motif. The Zn(2+) site is built by C209, H234, and E238. The 'KMSKS' region motif lies at K266–S270. An ATP-binding site is contributed by K269.

The protein belongs to the class-I aminoacyl-tRNA synthetase family. As to quaternary structure, monomer. Zn(2+) is required as a cofactor.

The protein localises to the cytoplasm. The catalysed reaction is tRNA(Cys) + L-cysteine + ATP = L-cysteinyl-tRNA(Cys) + AMP + diphosphate. The sequence is that of Cysteine--tRNA ligase from Pseudoalteromonas translucida (strain TAC 125).